Reading from the N-terminus, the 428-residue chain is Glutamate-1-semialdehyde 2,1-aminomutase (428 aa).

The residue at position 267 (Lys-267) is an N6-(pyridoxal phosphate)lysine.

The protein belongs to the class-III pyridoxal-phosphate-dependent aminotransferase family. HemL subfamily. In terms of assembly, homodimer. The cofactor is pyridoxal 5'-phosphate.

Its subcellular location is the cytoplasm. The catalysed reaction is (S)-4-amino-5-oxopentanoate = 5-aminolevulinate. The protein operates within porphyrin-containing compound metabolism; protoporphyrin-IX biosynthesis; 5-aminolevulinate from L-glutamyl-tRNA(Glu): step 2/2. The protein is Glutamate-1-semialdehyde 2,1-aminomutase of Sulfurihydrogenibium sp. (strain YO3AOP1).